Reading from the N-terminus, the 273-residue chain is Ribosomal RNA small subunit methyltransferase A (273 aa).

S-adenosyl-L-methionine is bound by residues asparagine 18, leucine 20, glycine 45, glutamate 66, aspartate 91, and asparagine 113.

Belongs to the class I-like SAM-binding methyltransferase superfamily. rRNA adenine N(6)-methyltransferase family. RsmA subfamily.

It localises to the cytoplasm. The catalysed reaction is adenosine(1518)/adenosine(1519) in 16S rRNA + 4 S-adenosyl-L-methionine = N(6)-dimethyladenosine(1518)/N(6)-dimethyladenosine(1519) in 16S rRNA + 4 S-adenosyl-L-homocysteine + 4 H(+). Its function is as follows. Specifically dimethylates two adjacent adenosines (A1518 and A1519) in the loop of a conserved hairpin near the 3'-end of 16S rRNA in the 30S particle. May play a critical role in biogenesis of 30S subunits. This Escherichia coli (strain SE11) protein is Ribosomal RNA small subunit methyltransferase A.